Consider the following 418-residue polypeptide: Deubiquitinase and deneddylase Dub1 (418 aa).

A compositionally biased stretch (polar residues) spans 1-10 (MLSPTNSISK). The interval 1–23 (MLSPTNSISKTAPVPPQDSSKPV) is disordered. Residues 40 to 60 (TALAVLLVVVTLGLILLFYSF) traverse the membrane as a helical segment. The disordered stretch occupies residues 72 to 144 (TRPSTKEQPT…PLPPKAPKPV (73 aa)). A compositionally biased stretch (pro residues) spans 86-141 (VPLPSPPLAVPRPSTPPPPVISRPSTPPAPTPAISPPSTPSAPKPSTPPPLPPKAP). Active-site residues include histidine 288, aspartate 305, and cysteine 358.

Belongs to the peptidase C48 family.

It is found in the secreted. It localises to the host cell. The protein resides in the membrane. Its function is as follows. Effector proteins function to alter host cell physiology and promote bacterial survival in host tissues. This protease possesses deubiquitinating and deneddylating activities. This chain is Deubiquitinase and deneddylase Dub1 (cdu1), found in Chlamydia trachomatis serovar B (strain TZ1A828/OT).